The following is a 533-amino-acid chain: Lymphocyte cytosolic protein 2 (533 aa).

An SAM domain is found at 15–81 (WDPDSLADYF…INKNEERRSI (67 aa)). The residue at position 23 (Y23) is a Phosphotyrosine. Residues 78-417 (RRSIFTRKPQ…PPSPAEEENS (340 aa)) are disordered. The segment covering 108 to 155 (FEEDDYESPNDDQDGEDDGDYESPNEEEEAPVEDDADYEPPPSNDEEA) has biased composition (acidic residues). Residues 184–213 (QQPPVPPQRPMAALPPPPAGRNHSPLPPPQ) show a composition bias toward pro residues. Position 207 is a phosphoserine (S207). Polar residues-rich tracts occupy residues 337–350 (MSSN…TKPS) and 365–376 (SESNSSFPQSAS). Phosphoserine occurs at positions 376 and 410. Residues 400 to 411 (LPLPNKPRPPSP) show a composition bias toward pro residues. Residues 422–530 (WYVSYITRPE…RYQCTLTHAA (109 aa)) form the SH2 domain.

Interacts with SLA. Interacts with CBLB. Interacts with GRB2. Interacts with SHB. Interacts with PRAM1. Interacts (via SH2 domain) with CD6 (via tyrosine phosphorylated C-terminus). Interacts with FYB1 and the phosphorylated form of FYB2. Interacts with 14-3-3 adapter/YWHAZ; this phosphorylation leads to YWHAZ proteolytic degradation. Interacts with VAV1; this interaction plays a role in TCR-mediated cytokine production. Interacts with AGER; this interaction plays an important role in AGER-mediated pro-inflammatory responses and cytokine release. Post-translationally, phosphorylated after T-cell receptor activation by ZAP70, ITK and TXK, which leads to the up-regulation of Th1 preferred cytokine IL-2. SYK-dependent phosphorylation is required for recruitment of PI3K signaling components. As to expression, highly expressed in spleen, thymus and peripheral blood leukocytes. Highly expressed also in T-cell and monocytic cell lines, expressed at lower level in B-cell lines. Not detected in fibroblast or neuroblastoma cell lines.

It localises to the cytoplasm. In terms of biological role, adapter protein primarily involved in signaling pathways within T-cells, as well as other immune cells such as platelets, mast cells, and natural killer (NK) cells. Plays a crucial role for transducing signal from the T-cell receptor (TCR) after antigen recognition leading to T-cell activation. Mechanistically, once phosphorylated by the kinase ZAP70, mediates interactions with the guanine-nucleotide exchange factor VAV1, the adapter protein NCK and the kinase ITK. In turn, stimulates the activation of PKC-theta/PRKCQ and NF-kappa-B transcriptional activity in response to CD3 and CD28 costimulation. Also plays an essential role in AGER-induced signaling pathways including p38 MAPK and ERK1/2 activation leading to cytokine release and pro-inflammatory responses. The sequence is that of Lymphocyte cytosolic protein 2 (LCP2) from Homo sapiens (Human).